The chain runs to 510 residues: ATP synthase subunit alpha (510 aa).

169–176 serves as a coordination point for ATP; the sequence is GDRQTGKT.

This sequence belongs to the ATPase alpha/beta chains family. In terms of assembly, F-type ATPases have 2 components, CF(1) - the catalytic core - and CF(0) - the membrane proton channel. CF(1) has five subunits: alpha(3), beta(3), gamma(1), delta(1), epsilon(1). CF(0) has three main subunits: a(1), b(2) and c(9-12). The alpha and beta chains form an alternating ring which encloses part of the gamma chain. CF(1) is attached to CF(0) by a central stalk formed by the gamma and epsilon chains, while a peripheral stalk is formed by the delta and b chains.

It is found in the cell inner membrane. It catalyses the reaction ATP + H2O + 4 H(+)(in) = ADP + phosphate + 5 H(+)(out). Produces ATP from ADP in the presence of a proton gradient across the membrane. The alpha chain is a regulatory subunit. This Nitrobacter hamburgensis (strain DSM 10229 / NCIMB 13809 / X14) protein is ATP synthase subunit alpha.